A 159-amino-acid chain; its full sequence is NADH-quinone oxidoreductase subunit I (159 aa).

4Fe-4S ferredoxin-type domains follow at residues R51–E80 and T90–N119. Residues C60, C63, C66, C70, C99, C102, C105, and C109 each contribute to the [4Fe-4S] cluster site.

This sequence belongs to the complex I 23 kDa subunit family. In terms of assembly, NDH-1 is composed of 14 different subunits. Subunits NuoA, H, J, K, L, M, N constitute the membrane sector of the complex. [4Fe-4S] cluster serves as cofactor.

Its subcellular location is the cell inner membrane. It catalyses the reaction a quinone + NADH + 5 H(+)(in) = a quinol + NAD(+) + 4 H(+)(out). Its function is as follows. NDH-1 shuttles electrons from NADH, via FMN and iron-sulfur (Fe-S) centers, to quinones in the respiratory chain. The immediate electron acceptor for the enzyme in this species is believed to be ubiquinone. Couples the redox reaction to proton translocation (for every two electrons transferred, four hydrogen ions are translocated across the cytoplasmic membrane), and thus conserves the redox energy in a proton gradient. The protein is NADH-quinone oxidoreductase subunit I of Rickettsia canadensis (strain McKiel).